The sequence spans 160 residues: Glucan endo-1,3-beta-glucosidase, acidic isoform PR-O (160 aa).

E81 acts as the Nucleophile in catalysis.

This sequence belongs to the glycosyl hydrolase 17 family. The N-terminus is blocked.

Its subcellular location is the secreted. The protein resides in the extracellular space. It catalyses the reaction Hydrolysis of (1-&gt;3)-beta-D-glucosidic linkages in (1-&gt;3)-beta-D-glucans.. Functionally, implicated in the defense of plants against pathogens. This Nicotiana tabacum (Common tobacco) protein is Glucan endo-1,3-beta-glucosidase, acidic isoform PR-O (PR0).